The sequence spans 60 residues: MRCVPVFVILLLLIASAASIDAQQKTKDDAPLTSLNDNALQQHWNKRCCPRKIWCCMIPR.

An N-terminal signal peptide occupies residues 1–19 (MRCVPVFVILLLLIASAAS). Positions 20-47 (IDAQQKTKDDAPLTSLNDNALQQHWNKR) are excised as a propeptide.

This sequence belongs to the conotoxin T superfamily. In terms of processing, contains 2 disulfide bonds that can be either 'C1-C3, C2-C4' or 'C1-C4, C2-C3', since these disulfide connectivities have been observed for conotoxins with cysteine framework V (for examples, see AC P0DQQ7 and AC P81755). In terms of tissue distribution, expressed by the venom duct.

The protein localises to the secreted. The sequence is that of Conotoxin Pu5.6 from Conus pulicarius (Flea-bitten cone).